The sequence spans 479 residues: Anaerobic nitric oxide reductase flavorubredoxin (479 aa).

A zinc metallo-hydrolase region spans residues 30-210 (LRGSSYNSYL…PFSRLVTPKI (181 aa)). The Fe cation site is built by His-79, Glu-81, Asp-83, His-147, Asp-166, and His-227. One can recognise a Flavodoxin-like domain in the interval 254 to 393 (ITIFYDTMSN…LCREHGREIA (140 aa)). FMN-binding positions include 260–264 (TMSNN) and 342–369 (AFGSHGWSGGAMDRLSTRLQDAGFEMSL). Residues 423–474 (GPRMQCSVCQWIYDPAKGEPMQDVAPGTPWSEVPDNFLCPECSLGKDVFDEL) enclose the Rubredoxin-like domain. Residues Cys-428, Cys-431, Cys-461, and Cys-464 each coordinate Fe cation.

The protein in the N-terminal section; belongs to the zinc metallo-hydrolase group 3 family. Homotetramer. The cofactor is Fe cation. FMN is required as a cofactor.

Its subcellular location is the cytoplasm. The protein operates within nitrogen metabolism; nitric oxide reduction. Functionally, anaerobic nitric oxide reductase; uses NADH to detoxify nitric oxide (NO), protecting several 4Fe-4S NO-sensitive enzymes. Has at least 2 reductase partners, only one of which (NorW, flavorubredoxin reductase) has been identified. NO probably binds to the di-iron center; electrons enter from the NorW at rubredoxin and are transferred sequentially to the FMN center and the di-iron center. Also able to function as an aerobic oxygen reductase. This chain is Anaerobic nitric oxide reductase flavorubredoxin, found in Shigella flexneri serotype 5b (strain 8401).